Reading from the N-terminus, the 400-residue chain is Acetate kinase (400 aa).

N7 contacts Mg(2+). Residue K14 coordinates ATP. A substrate-binding site is contributed by R91. The active-site Proton donor/acceptor is the D148. Residues 208-212 (HVGNG), 283-285 (DMR), and 331-335 (GVGEN) contribute to the ATP site. E385 is a binding site for Mg(2+).

The protein belongs to the acetokinase family. Homodimer. Requires Mg(2+) as cofactor. The cofactor is Mn(2+).

Its subcellular location is the cytoplasm. The catalysed reaction is acetate + ATP = acetyl phosphate + ADP. It functions in the pathway metabolic intermediate biosynthesis; acetyl-CoA biosynthesis; acetyl-CoA from acetate: step 1/2. Functionally, catalyzes the formation of acetyl phosphate from acetate and ATP. Can also catalyze the reverse reaction. The protein is Acetate kinase of Parabacteroides distasonis (strain ATCC 8503 / DSM 20701 / CIP 104284 / JCM 5825 / NCTC 11152).